The sequence spans 309 residues: 4-hydroxy-3-methylbut-2-enyl diphosphate reductase (309 aa).

A [4Fe-4S] cluster-binding site is contributed by C12. Residues H43 and H77 each contribute to the (2E)-4-hydroxy-3-methylbut-2-enyl diphosphate site. H43 and H77 together coordinate dimethylallyl diphosphate. Positions 43 and 77 each coordinate isopentenyl diphosphate. C99 provides a ligand contact to [4Fe-4S] cluster. A (2E)-4-hydroxy-3-methylbut-2-enyl diphosphate-binding site is contributed by H127. Dimethylallyl diphosphate is bound at residue H127. Residue H127 participates in isopentenyl diphosphate binding. E129 (proton donor) is an active-site residue. T167 lines the (2E)-4-hydroxy-3-methylbut-2-enyl diphosphate pocket. C197 contacts [4Fe-4S] cluster. Residues S225, S226, N227, and S269 each contribute to the (2E)-4-hydroxy-3-methylbut-2-enyl diphosphate site. 4 residues coordinate dimethylallyl diphosphate: S225, S226, N227, and S269. Positions 225, 226, 227, and 269 each coordinate isopentenyl diphosphate.

It belongs to the IspH family. Requires [4Fe-4S] cluster as cofactor.

It catalyses the reaction isopentenyl diphosphate + 2 oxidized [2Fe-2S]-[ferredoxin] + H2O = (2E)-4-hydroxy-3-methylbut-2-enyl diphosphate + 2 reduced [2Fe-2S]-[ferredoxin] + 2 H(+). The catalysed reaction is dimethylallyl diphosphate + 2 oxidized [2Fe-2S]-[ferredoxin] + H2O = (2E)-4-hydroxy-3-methylbut-2-enyl diphosphate + 2 reduced [2Fe-2S]-[ferredoxin] + 2 H(+). Its pathway is isoprenoid biosynthesis; dimethylallyl diphosphate biosynthesis; dimethylallyl diphosphate from (2E)-4-hydroxy-3-methylbutenyl diphosphate: step 1/1. It participates in isoprenoid biosynthesis; isopentenyl diphosphate biosynthesis via DXP pathway; isopentenyl diphosphate from 1-deoxy-D-xylulose 5-phosphate: step 6/6. In terms of biological role, catalyzes the conversion of 1-hydroxy-2-methyl-2-(E)-butenyl 4-diphosphate (HMBPP) into a mixture of isopentenyl diphosphate (IPP) and dimethylallyl diphosphate (DMAPP). Acts in the terminal step of the DOXP/MEP pathway for isoprenoid precursor biosynthesis. This Wolbachia sp. subsp. Brugia malayi (strain TRS) protein is 4-hydroxy-3-methylbut-2-enyl diphosphate reductase.